The chain runs to 120 residues: Phosphoribosyl-ATP pyrophosphatase (120 aa).

Belongs to the PRA-PH family.

Its subcellular location is the cytoplasm. It catalyses the reaction 1-(5-phospho-beta-D-ribosyl)-ATP + H2O = 1-(5-phospho-beta-D-ribosyl)-5'-AMP + diphosphate + H(+). It functions in the pathway amino-acid biosynthesis; L-histidine biosynthesis; L-histidine from 5-phospho-alpha-D-ribose 1-diphosphate: step 2/9. The protein is Phosphoribosyl-ATP pyrophosphatase of Methylibium petroleiphilum (strain ATCC BAA-1232 / LMG 22953 / PM1).